The sequence spans 167 residues: Cell division protein SepF (167 aa).

A disordered region spans residues 25 to 64; it reads EEDVAPVNNSTFQEKKHKKRSAVQRKQKNSDQEGDSVVPL. A compositionally biased stretch (basic residues) spans 39–51; that stretch reads KKHKKRSAVQRKQ.

It belongs to the SepF family. As to quaternary structure, homodimer. Interacts with FtsZ.

The protein resides in the cytoplasm. Functionally, cell division protein that is part of the divisome complex and is recruited early to the Z-ring. Probably stimulates Z-ring formation, perhaps through the cross-linking of FtsZ protofilaments. Its function overlaps with FtsA. The chain is Cell division protein SepF from Natranaerobius thermophilus (strain ATCC BAA-1301 / DSM 18059 / JW/NM-WN-LF).